The chain runs to 411 residues: MDKLLDRFFNYVSFDTQAKANVKSVPSTQGQRKLAQALQQELLTLGFSHVTLSDHGCVMATLPANVSWPVPTIGFIAHLDTSPDFSGKNVNPQIVENYRGGDIALGIGDEVLSPVMFPVLHQLLGHTLITTDGKTLLGADDKAGIAEIITAMVRLKHRNVPHGDIRIAFTPDEEVGKGAQFFNVAEFDAQWAYTVDGGGIGELEFENFNAASVAIKIVGNNVHPGSAKGVMVNALSLATRYHQELPVDETPECTEGYDGFYHLQSIKGTVERAEMHYIVRDFNRDSFEARKKNMVDIAKRVGKGLHRDCYIEIVIDDSYYNMREQIIKHPHIIELAQQAMLDCDITPIMKPIRGGTDGAQLSFKGLPCPNIFTGGYNYHGKHEFITLEGMEKAVAVIMRISELTAKRAKEL.

A Zn(2+)-binding site is contributed by His-78. Asp-80 is a catalytic residue. Residue Asp-140 coordinates Zn(2+). The Proton acceptor role is filled by Glu-173. Zn(2+) contacts are provided by Glu-174, Asp-196, and His-379.

Belongs to the peptidase M20B family. It depends on Zn(2+) as a cofactor.

It is found in the cytoplasm. The enzyme catalyses Release of the N-terminal residue from a tripeptide.. Functionally, cleaves the N-terminal amino acid of tripeptides. This is Peptidase T from Yersinia pseudotuberculosis serotype O:1b (strain IP 31758).